The primary structure comprises 283 residues: Elongation factor Ts (283 aa).

An involved in Mg(2+) ion dislocation from EF-Tu region spans residues 79-82; it reads TDFV.

This sequence belongs to the EF-Ts family.

It is found in the cytoplasm. Its function is as follows. Associates with the EF-Tu.GDP complex and induces the exchange of GDP to GTP. It remains bound to the aminoacyl-tRNA.EF-Tu.GTP complex up to the GTP hydrolysis stage on the ribosome. This chain is Elongation factor Ts, found in Shewanella amazonensis (strain ATCC BAA-1098 / SB2B).